Consider the following 576-residue polypeptide: Proline--tRNA ligase (576 aa).

This sequence belongs to the class-II aminoacyl-tRNA synthetase family. ProS type 1 subfamily. As to quaternary structure, homodimer.

The protein resides in the cytoplasm. The enzyme catalyses tRNA(Pro) + L-proline + ATP = L-prolyl-tRNA(Pro) + AMP + diphosphate. Functionally, catalyzes the attachment of proline to tRNA(Pro) in a two-step reaction: proline is first activated by ATP to form Pro-AMP and then transferred to the acceptor end of tRNA(Pro). As ProRS can inadvertently accommodate and process non-cognate amino acids such as alanine and cysteine, to avoid such errors it has two additional distinct editing activities against alanine. One activity is designated as 'pretransfer' editing and involves the tRNA(Pro)-independent hydrolysis of activated Ala-AMP. The other activity is designated 'posttransfer' editing and involves deacylation of mischarged Ala-tRNA(Pro). The misacylated Cys-tRNA(Pro) is not edited by ProRS. This chain is Proline--tRNA ligase, found in Bordetella bronchiseptica (strain ATCC BAA-588 / NCTC 13252 / RB50) (Alcaligenes bronchisepticus).